We begin with the raw amino-acid sequence, 241 residues long: uncharacterized protein (241 aa).

In terms of domain architecture, HTH luxR-type spans 147–212; it reads FSYRSVILTL…EMYAWINSAQ (66 aa).

This is an uncharacterized protein from Escherichia coli O157:H7.